The sequence spans 362 residues: Adenosine deaminase (362 aa).

Residues His41 and His43 each contribute to the Zn(2+) site. 43–45 (HLD) contributes to the a purine D-ribonucleoside binding site. The gating helix loop; regulates binding affinity for substrates and thus substrate selectivity stretch occupies residues 169–183 (IGETGISEESLRKAA). Position 200 (Gly200) interacts with a purine D-ribonucleoside. Position 225 (His225) interacts with Zn(2+). A purine D-ribonucleoside is bound by residues Glu228, His252, and Asp309. Asp309 is a Zn(2+) binding site.

The protein belongs to the metallo-dependent hydrolases superfamily. Adenosine and AMP deaminases family. Zn(2+) is required as a cofactor.

It catalyses the reaction adenosine + H2O + H(+) = inosine + NH4(+). Its pathway is purine metabolism; purine nucleoside salvage. With respect to regulation, inhibited by coformycin but not by methylthiocoformycin (MT-coformycin). Functionally, catalyzes the hydrolytic deamination of adenosine to produce inosine. Unlike other Plasmodium adenosine deaminases, does not catalyze the deamination of 5'-methylthioadenosine (MTA). Plays an essential role in the purine salvage pathway which allows the parasite to use host cell purines for the synthesis of nucleic acids. This Plasmodium gallinaceum protein is Adenosine deaminase.